The sequence spans 151 residues: Transcriptional regulator MraZ (151 aa).

SpoVT-AbrB domains lie at 7 to 53 (EYDC…SQTE) and 82 to 125 (INEV…SPDL).

It belongs to the MraZ family. As to quaternary structure, forms oligomers.

It localises to the cytoplasm. Its subcellular location is the nucleoid. The polypeptide is Transcriptional regulator MraZ (Cytophaga hutchinsonii (strain ATCC 33406 / DSM 1761 / CIP 103989 / NBRC 15051 / NCIMB 9469 / D465)).